The chain runs to 364 residues: Chorismate synthase (364 aa).

Residues Arg-48 and Arg-54 each coordinate NADP(+). FMN contacts are provided by residues 125–127 (RSS), Gly-282, 297–301 (KPPAS), and Arg-323.

It belongs to the chorismate synthase family. As to quaternary structure, homotetramer. FMNH2 serves as cofactor.

The enzyme catalyses 5-O-(1-carboxyvinyl)-3-phosphoshikimate = chorismate + phosphate. The protein operates within metabolic intermediate biosynthesis; chorismate biosynthesis; chorismate from D-erythrose 4-phosphate and phosphoenolpyruvate: step 7/7. In terms of biological role, catalyzes the anti-1,4-elimination of the C-3 phosphate and the C-6 proR hydrogen from 5-enolpyruvylshikimate-3-phosphate (EPSP) to yield chorismate, which is the branch point compound that serves as the starting substrate for the three terminal pathways of aromatic amino acid biosynthesis. This reaction introduces a second double bond into the aromatic ring system. This chain is Chorismate synthase, found in Chloroflexus aurantiacus (strain ATCC 29366 / DSM 635 / J-10-fl).